A 454-amino-acid polypeptide reads, in one-letter code: UDP-N-acetylmuramoylalanine--D-glutamate ligase (454 aa).

An ATP-binding site is contributed by 114-120 (GTNGKTT).

It belongs to the MurCDEF family.

Its subcellular location is the cytoplasm. The enzyme catalyses UDP-N-acetyl-alpha-D-muramoyl-L-alanine + D-glutamate + ATP = UDP-N-acetyl-alpha-D-muramoyl-L-alanyl-D-glutamate + ADP + phosphate + H(+). It participates in cell wall biogenesis; peptidoglycan biosynthesis. Cell wall formation. Catalyzes the addition of glutamate to the nucleotide precursor UDP-N-acetylmuramoyl-L-alanine (UMA). The sequence is that of UDP-N-acetylmuramoylalanine--D-glutamate ligase from Desulfitobacterium hafniense (strain Y51).